Consider the following 1907-residue polypeptide: Receptor-type tyrosine-protein phosphatase S (1907 aa).

Positions 1-29 (MAPTWSPSVVSVVGPVGLFLVLLARGCLA) are cleaved as a signal peptide. The Extracellular portion of the chain corresponds to 30–1257 (EEPPRFIREP…PQPIVDGEEG (1228 aa)). 3 Ig-like C2-type domains span residues 33–123 (PRFI…AKLT), 135–224 (PNID…ANLY), and 232–314 (PRFS…AQIT). Cystine bridges form between Cys-54/Cys-107 and Cys-156/Cys-207. An important for binding to glycosaminoglycan chains region spans residues 68-72 (KKGKK). 2 N-linked (GlcNAc...) asparagine glycosylation sites follow: Asn-250 and Asn-295. A disulfide bond links Cys-253 and Cys-298. 8 Fibronectin type-III domains span residues 321 to 411 (APGT…TGEQ), 416 to 510 (APRN…TQQG), 514 to 603 (QPMN…TLQA), 608 to 705 (PPQD…TDED), 710 to 809 (PPRK…TKGA), 810 to 906 (VLGR…APRG), 907 to 1008 (FPQI…LARD), and 1011 to 1095 (SPKN…TAFN). Residues 691–700 (PGPESSPVVV) are compositionally biased toward low complexity. Positions 691 to 711 (PGPESSPVVVRTDEDVPSAPP) are disordered. The N-linked (GlcNAc...) asparagine glycan is linked to Asn-720. N-linked (GlcNAc...) asparagine glycosylation is present at Asn-916. The helical transmembrane segment at 1258-1278 (LIWVIGPVLAVVFIICIVIAI) threads the bilayer. Topologically, residues 1279–1907 (LLYKNKPDSK…YLGSFDHYAT (629 aa)) are cytoplasmic. Residues 1286–1296 (DSKRKDSEPRT) are compositionally biased toward basic and acidic residues. Residues 1286–1313 (DSKRKDSEPRTKCLLNNADLAPHHPKDP) form a disordered region. 2 consecutive Tyrosine-protein phosphatase domains span residues 1352–1607 (LSQE…LLEA) and 1639–1898 (MELE…ALEY). Substrate contacts are provided by residues Asp-1516, 1548–1554 (CSAGVGR), and Gln-1592. The active-site Phosphocysteine intermediate is Cys-1548. Cys-1839 serves as the catalytic Phosphocysteine intermediate.

It belongs to the protein-tyrosine phosphatase family. Receptor class 2A subfamily. Binding to large heparan sulfate proteoglycan structures promotes oligomerization. Binding to chondroitin sulfate proteoglycan does not lead to oligomerization. Interacts (via Ig-like domains) with NTRK3. Interacts (via Ig-like domains) with NTRK1, but does not form detectable complexes with NTRK2. Interacts with PPFIA1, PPFIA2 and PPFIA3. A cleavage occurs, separating the extracellular domain from the transmembrane segment. This process called 'ectodomain shedding' is thought to be involved in receptor desensitization, signal transduction and/or membrane localization. Detected in brain cortex, cerebellum and thoracic spinal cord (at protein level). Detected in motor cortex and white matter of the spinal cord, but not in spinal cord gray matter. Isoform 1 and isoform 6 are predominantly expressed in the brain (cerebrum and cerebellum) and to a lesser extent in the heart and skeletal muscle. Also found in neuronal-derived cell lines. Detected in the ganglion cell layer of the retina and in glial cells along the optic nerve. Detected in bone marrow and spleen plasmacytoid dendritic cells.

Its subcellular location is the cell membrane. It localises to the cell projection. It is found in the axon. The protein localises to the perikaryon. The protein resides in the cytoplasmic vesicle. Its subcellular location is the secretory vesicle. It localises to the synaptic vesicle membrane. It is found in the synapse. The protein localises to the synaptosome. The protein resides in the postsynaptic density. Its subcellular location is the neuron projection. It localises to the growth cone. It carries out the reaction O-phospho-L-tyrosyl-[protein] + H2O = L-tyrosyl-[protein] + phosphate. In terms of biological role, cell surface receptor that binds to glycosaminoglycans, including chondroitin sulfate proteoglycans and heparan sulfate proteoglycans. Binding to chondroitin sulfate and heparan sulfate proteoglycans has opposite effects on PTPRS oligomerization and regulation of neurite outgrowth. Contributes to the inhibition of neurite and axonal outgrowth by chondroitin sulfate proteoglycans, also after nerve transection. Plays a role in stimulating neurite outgrowth in response to the heparan sulfate proteoglycan GPC2. Required for normal brain development, especially for normal development of the pituitary gland and the olfactory bulb. Functions as a tyrosine phosphatase. Mediates dephosphorylation of NTRK1, NTRK2 and NTRK3. Plays a role in down-regulation of signaling cascades that lead to the activation of Akt and MAP kinases. Down-regulates TLR9-mediated activation of NF-kappa-B, as well as production of TNF, interferon alpha and interferon beta. The sequence is that of Receptor-type tyrosine-protein phosphatase S (Ptprs) from Mus musculus (Mouse).